Here is a 121-residue protein sequence, read N- to C-terminus: Small ribosomal subunit protein uS13 (121 aa).

The segment at 95–121 is disordered; it reads LPVRGQNTKNNARTRKGKAVAIAGKKK. Over residues 106–121 the composition is skewed to basic residues; sequence ARTRKGKAVAIAGKKK.

Belongs to the universal ribosomal protein uS13 family. In terms of assembly, part of the 30S ribosomal subunit. Forms a loose heterodimer with protein S19. Forms two bridges to the 50S subunit in the 70S ribosome.

Located at the top of the head of the 30S subunit, it contacts several helices of the 16S rRNA. In the 70S ribosome it contacts the 23S rRNA (bridge B1a) and protein L5 of the 50S subunit (bridge B1b), connecting the 2 subunits; these bridges are implicated in subunit movement. Contacts the tRNAs in the A and P-sites. The polypeptide is Small ribosomal subunit protein uS13 (Streptococcus thermophilus (strain CNRZ 1066)).